Consider the following 317-residue polypeptide: Ribonuclease 3-like protein 2 (317 aa).

Positions 1-26 (MAPPPAMKPASRKRGPPAPDPVELPP) are disordered. Residues 16–26 (PPAPDPVELPP) are compositionally biased toward pro residues. The region spanning 37–185 (AARVERLLRY…IAAAVYVDCK (149 aa)) is the RNase III domain. Mg(2+) contacts are provided by glutamate 74, aspartate 171, and glutamate 174. Residues 211-274 (QPVTMLHELC…ARDATRKLAG (64 aa)) form the DRBM domain.

Requires Mg(2+) as cofactor. Mn(2+) is required as a cofactor.

Functionally, cleaves double-stranded RNA (dsRNA). In Oryza sativa subsp. japonica (Rice), this protein is Ribonuclease 3-like protein 2.